The following is a 98-amino-acid chain: NADH-ubiquinone oxidoreductase chain 4L (98 aa).

3 consecutive transmembrane segments (helical) span residues 1–21 (MPFI…GLLM), 29–49 (SLLC…LLCL), and 61–81 (MILL…LVMV).

Belongs to the complex I subunit 4L family. In terms of assembly, core subunit of respiratory chain NADH dehydrogenase (Complex I) which is composed of 45 different subunits.

It is found in the mitochondrion inner membrane. The catalysed reaction is a ubiquinone + NADH + 5 H(+)(in) = a ubiquinol + NAD(+) + 4 H(+)(out). Core subunit of the mitochondrial membrane respiratory chain NADH dehydrogenase (Complex I) which catalyzes electron transfer from NADH through the respiratory chain, using ubiquinone as an electron acceptor. Part of the enzyme membrane arm which is embedded in the lipid bilayer and involved in proton translocation. The polypeptide is NADH-ubiquinone oxidoreductase chain 4L (MT-ND4L) (Dugong dugon (Dugong)).